Consider the following 638-residue polypeptide: Chaperone protein HtpG (638 aa).

An a; substrate-binding region spans residues methionine 1–arginine 346. Positions glutamate 347–lysine 563 are b. Positions leucine 564–lysine 638 are c.

Belongs to the heat shock protein 90 family. Homodimer.

It localises to the cytoplasm. Its function is as follows. Molecular chaperone. Has ATPase activity. This Shewanella pealeana (strain ATCC 700345 / ANG-SQ1) protein is Chaperone protein HtpG.